A 196-amino-acid polypeptide reads, in one-letter code: SPRY domain-containing protein 7 (196 aa).

The residue at position 2 (Ala-2) is an N-acetylalanine. Residues 2–184 enclose the B30.2/SPRY domain; the sequence is ATSVLCCLRC…FSEFYHTPPP (183 aa).

This chain is SPRY domain-containing protein 7 (SPRYD7), found in Homo sapiens (Human).